The following is a 227-amino-acid chain: Ion-translocating oxidoreductase complex subunit E (227 aa).

Transmembrane regions (helical) follow at residues 18–38 (ALVQ…VTNA), 39–59 (LGLG…VSLV), 69–89 (IPVF…LMNA), 93–113 (GLYL…IIIG), 125–145 (LPAV…LVLL), and 182–202 (HFLL…LIAL).

The protein belongs to the NqrDE/RnfAE family. In terms of assembly, the complex is composed of six subunits: RnfA, RnfB, RnfC, RnfD, RnfE and RnfG.

The protein localises to the cell inner membrane. Its function is as follows. Part of a membrane-bound complex that couples electron transfer with translocation of ions across the membrane. This chain is Ion-translocating oxidoreductase complex subunit E, found in Aliivibrio fischeri (strain MJ11) (Vibrio fischeri).